Reading from the N-terminus, the 316-residue chain is Olfactory receptor 1N2 (316 aa).

The Extracellular segment spans residues 1–28; that stretch reads MGKPGRVNQTTVSDFLLLGLSEWPEEQP. The N-linked (GlcNAc...) asparagine glycan is linked to asparagine 8. The chain crosses the membrane as a helical span at residues 29 to 49; it reads LLFGIFLGMYLVTMVGNLLII. Over 50–60 the chain is Cytoplasmic; it reads LAISSDPHLHT. Residues 61-81 form a helical membrane-spanning segment; the sequence is PMYFFLANLSLTDACFTSASI. The Extracellular portion of the chain corresponds to 82 to 100; it reads PKMLANIHTQSQIISYSGC. A disulfide bond links cysteine 100 and cysteine 182. A helical transmembrane segment spans residues 101 to 121; it reads LAQLYFLLMFGGLDNCLLAVM. The Cytoplasmic segment spans residues 122 to 145; it reads AYDRYVAICQPLHYSTSMSPQLCA. A helical membrane pass occupies residues 146 to 166; that stretch reads LMLGVCWVLTNCPALMHTLLL. The Extracellular portion of the chain corresponds to 167–199; sequence TRVAFCAQKAIPHFYCDPSALLKLACSDTHVNE. The helical transmembrane segment at 200–220 threads the bilayer; that stretch reads LMIITMGLLFLTVPLLLIVFS. The Cytoplasmic segment spans residues 221–243; sequence YVRIFWAVFVISSPGGRWKAFST. Residues 244-264 traverse the membrane as a helical segment; the sequence is CGSHLTVVLLFYGSLMGVYLL. The Extracellular portion of the chain corresponds to 265 to 274; that stretch reads PPSTYSTERE. A helical membrane pass occupies residues 275–295; the sequence is SRAAVLYMVIIPTLNPFIYSL. The Cytoplasmic portion of the chain corresponds to 296–316; sequence RNRDMKEALGKLFVSGKTFFL.

The protein belongs to the G-protein coupled receptor 1 family.

The protein resides in the membrane. Functionally, odorant receptor. This is Olfactory receptor 1N2 (OR1N2) from Homo sapiens (Human).